We begin with the raw amino-acid sequence, 81 residues long: Photosystem I iron-sulfur center (81 aa).

4Fe-4S ferredoxin-type domains lie at Ser-2–Trp-31 and Ile-39–Ser-68. Positions 11, 14, 17, 21, 48, 51, 54, and 58 each coordinate [4Fe-4S] cluster.

The eukaryotic PSI reaction center is composed of at least 11 subunits. [4Fe-4S] cluster is required as a cofactor.

Its subcellular location is the plastid. The protein localises to the chloroplast thylakoid membrane. The enzyme catalyses reduced [plastocyanin] + hnu + oxidized [2Fe-2S]-[ferredoxin] = oxidized [plastocyanin] + reduced [2Fe-2S]-[ferredoxin]. Its function is as follows. Apoprotein for the two 4Fe-4S centers FA and FB of photosystem I (PSI); essential for photochemical activity. FB is the terminal electron acceptor of PSI, donating electrons to ferredoxin. The C-terminus interacts with PsaA/B/D and helps assemble the protein into the PSI complex. Required for binding of PsaD and PsaE to PSI. PSI is a plastocyanin-ferredoxin oxidoreductase, converting photonic excitation into a charge separation, which transfers an electron from the donor P700 chlorophyll pair to the spectroscopically characterized acceptors A0, A1, FX, FA and FB in turn. The polypeptide is Photosystem I iron-sulfur center (Daucus carota (Wild carrot)).